The sequence spans 285 residues: MDAIKKKMQAMKLEKDNALDRAAMCEQQAKDANLRAEKAEEEARQLQKKIQTIENELDQTQESLMQVNGKLEEKEKALQNAESEVAALNRRIQLLEEDLERSEERLATATAKLSEASQAADESERARKVLENRSLADEERMDALENQLKEARFLAEEADKKYDEVARKLAMVEADLERAEERAESGESKIVELEEELRVVGNNLKSLEVSEEKANQREEEYKNQIKTLTTRLKEAEARAEFAERSVQKLQKEVDRLEDELVAEKEKYKDIGDDLDTAFVELILKE.

A coiled-coil region spans residues 1–277 (MDAIKKKMQA…KDIGDDLDTA (277 aa)). The tract at residues 103–133 (EERLATATAKLSEASQAADESERARKVLENR) is disordered. Positions 122–133 (ESERARKVLENR) are enriched in basic and acidic residues.

The protein belongs to the tropomyosin family. As to quaternary structure, homodimer.

Tropomyosin, in association with the troponin complex, plays a central role in the calcium dependent regulation of muscle contraction. The protein is Tropomyosin-2 of Bombyx mori (Silk moth).